The sequence spans 174 residues: Ribosome maturation factor RimM (174 aa).

Residues 99 to 172 (ADEFFYHDVI…RLVIRPIAGL (74 aa)) form the PRC barrel domain.

The protein belongs to the RimM family. In terms of assembly, binds ribosomal protein uS19.

The protein localises to the cytoplasm. In terms of biological role, an accessory protein needed during the final step in the assembly of 30S ribosomal subunit, possibly for assembly of the head region. Essential for efficient processing of 16S rRNA. May be needed both before and after RbfA during the maturation of 16S rRNA. It has affinity for free ribosomal 30S subunits but not for 70S ribosomes. This chain is Ribosome maturation factor RimM, found in Chloroflexus aurantiacus (strain ATCC 29366 / DSM 635 / J-10-fl).